The primary structure comprises 256 residues: Imidazole glycerol phosphate synthase subunit HisF (256 aa).

Catalysis depends on residues aspartate 11 and aspartate 130.

It belongs to the HisA/HisF family. In terms of assembly, heterodimer of HisH and HisF.

It is found in the cytoplasm. The enzyme catalyses 5-[(5-phospho-1-deoxy-D-ribulos-1-ylimino)methylamino]-1-(5-phospho-beta-D-ribosyl)imidazole-4-carboxamide + L-glutamine = D-erythro-1-(imidazol-4-yl)glycerol 3-phosphate + 5-amino-1-(5-phospho-beta-D-ribosyl)imidazole-4-carboxamide + L-glutamate + H(+). The protein operates within amino-acid biosynthesis; L-histidine biosynthesis; L-histidine from 5-phospho-alpha-D-ribose 1-diphosphate: step 5/9. In terms of biological role, IGPS catalyzes the conversion of PRFAR and glutamine to IGP, AICAR and glutamate. The HisF subunit catalyzes the cyclization activity that produces IGP and AICAR from PRFAR using the ammonia provided by the HisH subunit. This chain is Imidazole glycerol phosphate synthase subunit HisF, found in Psychrobacter sp. (strain PRwf-1).